A 301-amino-acid chain; its full sequence is Coiled-coil domain-containing protein 50 (301 aa).

The stretch at 57–131 (QVAKQLQEEE…LQEEKKRKKH (75 aa)) forms a coiled coil. Basic and acidic residues-rich tracts occupy residues 123 to 142 (QEEK…KVYE), 161 to 175 (VYDK…SDAE), and 214 to 262 (AFKK…DKSS). Disordered regions lie at residues 123–175 (QEEK…SDAE) and 214–301 (AFKK…RRKQ).

Post-translationally, phosphorylated on tyrosine residues.

In terms of biological role, involved in EGFR signaling. This is Coiled-coil domain-containing protein 50 (CCDC50) from Gallus gallus (Chicken).